The chain runs to 129 residues: Small ribosomal subunit protein uS9 (129 aa).

The protein belongs to the universal ribosomal protein uS9 family.

The protein is Small ribosomal subunit protein uS9 of Chlorobium chlorochromatii (strain CaD3).